Reading from the N-terminus, the 1170-residue chain is Glucose transport transcription regulator RGT1 (1170 aa).

Residues 1 to 22 (MNELNTVSTNSSDSTKNGGTSN) show a composition bias toward polar residues. The segment at 1–46 (MNELNTVSTNSSDSTKNGGTSNSPDDMDSAAAASHAIKKRTKASRA) is disordered. Residues 47–76 (CDQCRKKKIKCDYKDEKGVCSNCQRNGDRC) constitute a DNA-binding region (zn(2)-C6 fungal-type). A disordered region spans residues 77–148 (SFDRVPLKRG…VPSTPSRSNS (72 aa)). Positions 99–108 (RTNEIQDHNN) are enriched in basic and acidic residues. A compositionally biased stretch (low complexity) spans 113 to 138 (NTFDNSNNTLNNNTGNSGDNGINSNT). Over residues 139–148 (VPSTPSRSNS) the composition is skewed to polar residues. S202, S205, S208, and S229 each carry phosphoserine. The segment covering 217–234 (PNEQLSYNTVQQSPITNK) has biased composition (polar residues). Disordered stretches follow at residues 217–254 (PNEQLSYNTVQQSPITNKHTNDSGNANGSVTGSGSASG), 269–288 (APTDDHNGEQTRRSSSIPSL), 293–343 (SNSL…PSIS), 384–506 (AQQT…HPMT), 725–757 (DEEANTGNGNTKTSEFEIGSESAGHMNPSNSPN), and 946–974 (RPPNPPANNPTVQEGPSAMGSSPVAGNLN). Over residues 239 to 250 (SGNANGSVTGSG) the composition is skewed to low complexity. Positions 271–280 (TDDHNGEQTR) are enriched in basic and acidic residues. 2 positions are modified to phosphoserine: S283 and S284. Low complexity-rich tracts occupy residues 293–302 (SNSLLLGGQP), 309–341 (QQSQPQAHQQKLQQGQNPYSYSQFSQQQPYNPS), and 385–397 (QQTQRPQGQQVPQ). S410 and S414 each carry phosphoserine. The segment covering 411–422 (APVSVTLSTDRL) has biased composition (polar residues). The span at 424-444 (GNENNNGEINNNNGSNNSGSS) shows a compositional bias: low complexity. The span at 445 to 457 (KDTSQHSQESVTT) shows a compositional bias: polar residues. The span at 473 to 488 (STKKRRKSYVSKKTKP) shows a compositional bias: basic residues. Residues 493 to 506 (SISITSKDSAHPMT) show a composition bias toward polar residues. At S1130 the chain carries Phosphoserine.

Belongs to the EDS1/RGT1 family. In terms of processing, glucose-induced phosphorylation regulates the DNA-binding activity. Hyperphosphorylation in cells growing on high levels of glucose does prevents DNA-binding and dephosphorylation restores DNA-binding ability.

The protein resides in the nucleus. Its subcellular location is the cytoplasm. Glucose-responsive transcription factor that regulates expression of several glucose transporter (HXT) genes in response to glucose. In the absence of glucose, it functions as a transcriptional repressor, whereas high concentrations of glucose cause it to function as a transcriptional activator. In cells growing on low levels of glucose, has a neutral role, neither repressing nor activating transcription. Binds the consensus binding site sequence 5'-CGGANNA-3', of which multiple copies are present in all HXT promoters regulated by RGT1. The protein is Glucose transport transcription regulator RGT1 (RGT1) of Saccharomyces cerevisiae (strain YJM789) (Baker's yeast).